Reading from the N-terminus, the 214-residue chain is S-crystallin 1 (214 aa).

Residues 2 to 79 (PSYTLHYFNH…YLAREFGFHG (78 aa)) enclose the GST N-terminal domain. The GST C-terminal domain occupies 81-214 (NNMEMARVDF…YLQRRCRTDF (134 aa)).

It belongs to the GST superfamily. In terms of tissue distribution, lens.

S-crystallins are structural components of squids and octopi eye lens. Contains relatively little GST activity (1/1000 of that of mammalian GST enzyme). This chain is S-crystallin 1 (OCTS1), found in Octopus vulgaris (Common octopus).